We begin with the raw amino-acid sequence, 411 residues long: Phosphopentomutase (411 aa).

Residues Asp14, Asp306, His311, Asp347, His348, and His359 each coordinate Mn(2+).

Belongs to the phosphopentomutase family. Mn(2+) serves as cofactor.

The protein localises to the cytoplasm. The catalysed reaction is 2-deoxy-alpha-D-ribose 1-phosphate = 2-deoxy-D-ribose 5-phosphate. It carries out the reaction alpha-D-ribose 1-phosphate = D-ribose 5-phosphate. It participates in carbohydrate degradation; 2-deoxy-D-ribose 1-phosphate degradation; D-glyceraldehyde 3-phosphate and acetaldehyde from 2-deoxy-alpha-D-ribose 1-phosphate: step 1/2. Its function is as follows. Isomerase that catalyzes the conversion of deoxy-ribose 1-phosphate (dRib-1-P) and ribose 1-phosphate (Rib-1-P) to deoxy-ribose 5-phosphate (dRib-5-P) and ribose 5-phosphate (Rib-5-P), respectively. This Lactococcus lactis subsp. cremoris (strain SK11) protein is Phosphopentomutase.